A 360-amino-acid polypeptide reads, in one-letter code: Peptide chain release factor 1 (360 aa).

Gln235 is subject to N5-methylglutamine.

This sequence belongs to the prokaryotic/mitochondrial release factor family. Post-translationally, methylated by PrmC. Methylation increases the termination efficiency of RF1.

The protein localises to the cytoplasm. Peptide chain release factor 1 directs the termination of translation in response to the peptide chain termination codons UAG and UAA. In Burkholderia vietnamiensis (strain G4 / LMG 22486) (Burkholderia cepacia (strain R1808)), this protein is Peptide chain release factor 1.